The chain runs to 240 residues: 4-hydroxy-tetrahydrodipicolinate reductase (240 aa).

NAD(+)-binding positions include 79–81 and 103–106; these read ATT and SANM. Residue H135 is the Proton donor/acceptor of the active site. H136 lines the (S)-2,3,4,5-tetrahydrodipicolinate pocket. The active-site Proton donor is the K139. A (S)-2,3,4,5-tetrahydrodipicolinate-binding site is contributed by 145 to 146; that stretch reads GT.

Belongs to the DapB family.

The protein localises to the cytoplasm. It carries out the reaction (S)-2,3,4,5-tetrahydrodipicolinate + NAD(+) + H2O = (2S,4S)-4-hydroxy-2,3,4,5-tetrahydrodipicolinate + NADH + H(+). The enzyme catalyses (S)-2,3,4,5-tetrahydrodipicolinate + NADP(+) + H2O = (2S,4S)-4-hydroxy-2,3,4,5-tetrahydrodipicolinate + NADPH + H(+). It participates in amino-acid biosynthesis; L-lysine biosynthesis via DAP pathway; (S)-tetrahydrodipicolinate from L-aspartate: step 4/4. In terms of biological role, catalyzes the conversion of 4-hydroxy-tetrahydrodipicolinate (HTPA) to tetrahydrodipicolinate. The protein is 4-hydroxy-tetrahydrodipicolinate reductase of Staphylococcus aureus (strain MSSA476).